A 415-amino-acid polypeptide reads, in one-letter code: tRNA(Ile2) 2-agmatinylcytidine synthetase TiaS (415 aa).

The protein belongs to the TiaS family.

It is found in the cytoplasm. The catalysed reaction is cytidine(34) in tRNA(Ile2) + agmatine + ATP + H2O = 2-agmatinylcytidine(34) in tRNA(Ile2) + AMP + 2 phosphate + 2 H(+). Its function is as follows. ATP-dependent agmatine transferase that catalyzes the formation of 2-agmatinylcytidine (agm2C) at the wobble position (C34) of tRNA(Ile2), converting the codon specificity from AUG to AUA. The sequence is that of tRNA(Ile2) 2-agmatinylcytidine synthetase TiaS from Pyrobaculum neutrophilum (strain DSM 2338 / JCM 9278 / NBRC 100436 / V24Sta) (Thermoproteus neutrophilus).